We begin with the raw amino-acid sequence, 311 residues long: Phosphoribosylamine--glycine ligase (311 aa).

Residues 1–191 form the ATP-grasp domain; the sequence is DPRVRKQYIQ…LVQVLLAACR (191 aa).

It belongs to the GARS family.

It is found in the plastid. The protein resides in the chloroplast. The enzyme catalyses 5-phospho-beta-D-ribosylamine + glycine + ATP = N(1)-(5-phospho-beta-D-ribosyl)glycinamide + ADP + phosphate + H(+). Its pathway is purine metabolism; IMP biosynthesis via de novo pathway; N(1)-(5-phospho-D-ribosyl)glycinamide from 5-phospho-alpha-D-ribose 1-diphosphate: step 2/2. This Vigna unguiculata (Cowpea) protein is Phosphoribosylamine--glycine ligase (PUR2).